Reading from the N-terminus, the 271-residue chain is uncharacterized protein (271 aa).

3 consecutive transmembrane segments (helical) span residues 11 to 33 (GWLALALVVVAFTYLCFTVLAPW), 172 to 194 (SINTGQVAALTGVQLAGSYLQLI), and 214 to 236 (FLSYGIQWISFGILAPIGLGYFA). Positions 245 to 271 (REKAGSPPPDKPMTVEQKLADRYGRRR) are disordered. Over residues 262–271 (KLADRYGRRR) the composition is skewed to basic and acidic residues.

This sequence belongs to the SURF1 family.

It is found in the cell membrane. This is an uncharacterized protein from Mycobacterium tuberculosis (strain CDC 1551 / Oshkosh).